Consider the following 101-residue polypeptide: Large ribosomal subunit protein uL23 (101 aa).

The protein belongs to the universal ribosomal protein uL23 family. As to quaternary structure, part of the 50S ribosomal subunit. Contacts protein L29, and trigger factor when it is bound to the ribosome.

In terms of biological role, one of the early assembly proteins it binds 23S rRNA. One of the proteins that surrounds the polypeptide exit tunnel on the outside of the ribosome. Forms the main docking site for trigger factor binding to the ribosome. This Corynebacterium efficiens (strain DSM 44549 / YS-314 / AJ 12310 / JCM 11189 / NBRC 100395) protein is Large ribosomal subunit protein uL23.